Reading from the N-terminus, the 729-residue chain is NAD(P)H-quinone oxidoreductase subunit 5, chloroplastic (729 aa).

The next 18 membrane-spanning stretches (helical) occupy residues 9–29 (WIIPLCPLIASCCTGSLSFFF), 39–59 (LCALLNVFSLAISMFVSLAIF), 87–107 (FLVDSLTLVMSLLVTTVGVLV), 125–145 (YAYLSLFTASMLGLVLSPNLI), 147–167 (LYVFWELVGMCSYLLVGFWFA), 184–204 (IGDFGLLLGILGIYWTTGSFE), 218–238 (IGFSNPILTNIIAFLLLAGPV), 258–278 (TPISALIHAATMVAAGIFFIA), 289–311 (LVMQASSWLGGATALLGATLALA), 327–347 (LGYMVLALGIGAYQSALFHLV), 354–374 (ALLFLGAGSVIHSIEKVVGYS), 395–415 (GTTFLLGTLSLSGIPPLACFW), 425–445 (WLSSLPLGILASGTAGLTAFY), 540–560 (FSLVMLAIPTTLVGLLGINLI), 592–612 (ILLNSRSSLILSFFGIFFSFI), 627–646 (LVGFTKLVSKFGLLVQSWSL), 676–696 (YGIDGFVNVIGALNFFGGEFI), and 708–728 (LFIIIFGAILSSVLIFIFLPF).

Belongs to the complex I subunit 5 family. NDH is composed of at least 16 different subunits, 5 of which are encoded in the nucleus.

It localises to the plastid. It is found in the chloroplast thylakoid membrane. It carries out the reaction a plastoquinone + NADH + (n+1) H(+)(in) = a plastoquinol + NAD(+) + n H(+)(out). The catalysed reaction is a plastoquinone + NADPH + (n+1) H(+)(in) = a plastoquinol + NADP(+) + n H(+)(out). Functionally, NDH shuttles electrons from NAD(P)H:plastoquinone, via FMN and iron-sulfur (Fe-S) centers, to quinones in the photosynthetic chain and possibly in a chloroplast respiratory chain. The immediate electron acceptor for the enzyme in this species is believed to be plastoquinone. Couples the redox reaction to proton translocation, and thus conserves the redox energy in a proton gradient. This Adiantum capillus-veneris (Maidenhair fern) protein is NAD(P)H-quinone oxidoreductase subunit 5, chloroplastic (ndhF).